Reading from the N-terminus, the 385-residue chain is Meiotic recombination protein SPO11-2 (385 aa).

Residues Leu-24–Ala-169 form the Topo IIA-type catalytic domain. Tyr-126 serves as the catalytic O-(5'-phospho-DNA)-tyrosine intermediate. The Mg(2+) site is built by Glu-219 and Asp-272.

Belongs to the TOP6A family. In terms of assembly, interacts with TOP6B. Requires Mg(2+) as cofactor.

It localises to the nucleus. The catalysed reaction is ATP-dependent breakage, passage and rejoining of double-stranded DNA.. In terms of biological role, required for meiotic recombination. Mediates DNA cleavage that forms the double-strand breaks (DSB) that initiate meiotic recombination. The polypeptide is Meiotic recombination protein SPO11-2 (SPO11-2) (Oryza sativa subsp. japonica (Rice)).